Consider the following 292-residue polypeptide: 1,4-dihydroxy-2-naphthoate octaprenyltransferase (292 aa).

Transmembrane regions (helical) follow at residues 35–55 (AAVWWKALLALAVAVALVIGV), 101–121 (ALAGLVLALLSAPWLIAVGAI), 137–157 (GYAGFGELAVFVFFGPVAVLG), 166–186 (VDWVGLAQAVATGALSCSVLV), 220–240 (LLAVAGVLTFVLMLATPWCVV), and 271–291 (TGLAMLVWALAVAGALAFGQL).

This sequence belongs to the MenA family. Type 1 subfamily. Requires Mg(2+) as cofactor.

Its subcellular location is the cell membrane. The catalysed reaction is an all-trans-polyprenyl diphosphate + 1,4-dihydroxy-2-naphthoate + H(+) = a 2-demethylmenaquinol + CO2 + diphosphate. It functions in the pathway quinol/quinone metabolism; menaquinone biosynthesis; menaquinol from 1,4-dihydroxy-2-naphthoate: step 1/2. Activity is abolished by EDTA. Inhibited by Ro 48-8071, which is non-competitive with regard to DHNA and competitive with regard to the isoprenyldiphosphate substrate. Functionally, conversion of 1,4-dihydroxy-2-naphthoate (DHNA) to demethylmenaquinone (DMK). Can use a variety of allylic isoprenyl diphosphates as substrates but has a requirement for at least three isoprene units. This Mycobacterium tuberculosis (strain ATCC 25618 / H37Rv) protein is 1,4-dihydroxy-2-naphthoate octaprenyltransferase.